A 415-amino-acid polypeptide reads, in one-letter code: Plasminogen activator inhibitor 2 (415 aa).

Cys5 and Cys405 are oxidised to a cystine. Asn75, Asn115, and Asn339 each carry an N-linked (GlcNAc...) asparagine glycan.

This sequence belongs to the serpin family. Ov-serpin subfamily. Interacts with PSMB1. Post-translationally, the signal sequence is not cleaved.

The protein resides in the cytoplasm. The protein localises to the secreted. It localises to the extracellular space. Inhibits urokinase-type plasminogen activator. The monocyte derived PAI-2 is distinct from the endothelial cell-derived PAI-1. This chain is Plasminogen activator inhibitor 2 (SERPINB2), found in Homo sapiens (Human).